A 200-amino-acid polypeptide reads, in one-letter code: Serotonin N-acetyltransferase 2, chloroplastic (200 aa).

The N-terminal 41 residues, 1–41, are a transit peptide targeting the chloroplast; sequence MQMQAARPRVGVRPRGGIRPFPLPTLSFNNNSNRSACACAC. The N-acetyltransferase domain occupies 55-195; sequence FAVRRSSTGL…MAFYRSRQQI (141 aa).

The protein localises to the cytoplasm. It is found in the plastid. It localises to the chloroplast. It catalyses the reaction serotonin + acetyl-CoA = N-acetylserotonin + CoA + H(+). It carries out the reaction tyramine + acetyl-CoA = N-acetyltyramine + CoA + H(+). The enzyme catalyses tryptamine + acetyl-CoA = N-acetyltryptamine + CoA + H(+). The catalysed reaction is 5-methoxytryptamine + acetyl-CoA = melatonin + CoA + H(+). The protein operates within aromatic compound metabolism; melatonin biosynthesis; melatonin from serotonin: step 1/2. Functionally, catalyzes the N-acetylation of serotonin into N-acetylserotonin, the penultimate step in the synthesis of melatonin. Catalyzes in vitro the N-acetylation of tryptamine to produce N-acetyltryptamine, 5-methoxytryptamine to produce melatonin and tyramine to produce N-acetyltyramine. The chain is Serotonin N-acetyltransferase 2, chloroplastic from Oryza sativa subsp. japonica (Rice).